The chain runs to 74 residues: Large ribosomal subunit protein uL30 (74 aa).

This sequence belongs to the universal ribosomal protein uL30 family. In terms of assembly, part of the 50S ribosomal subunit.

In Micrococcus luteus (strain ATCC 4698 / DSM 20030 / JCM 1464 / CCM 169 / CCUG 5858 / IAM 1056 / NBRC 3333 / NCIMB 9278 / NCTC 2665 / VKM Ac-2230) (Micrococcus lysodeikticus), this protein is Large ribosomal subunit protein uL30.